Reading from the N-terminus, the 483-residue chain is Glutamate--tRNA ligase (483 aa).

The short motif at 9–19 is the 'HIGH' region element; sequence PSPTGFLHIGN. The 'KMSKS' region signature appears at 253–257; it reads KLSKR. Residue Lys-256 coordinates ATP.

It belongs to the class-I aminoacyl-tRNA synthetase family. Glutamate--tRNA ligase type 1 subfamily. As to quaternary structure, monomer.

Its subcellular location is the cytoplasm. The enzyme catalyses tRNA(Glu) + L-glutamate + ATP = L-glutamyl-tRNA(Glu) + AMP + diphosphate. In terms of biological role, catalyzes the attachment of glutamate to tRNA(Glu) in a two-step reaction: glutamate is first activated by ATP to form Glu-AMP and then transferred to the acceptor end of tRNA(Glu). In Mycoplasma mycoides subsp. mycoides SC (strain CCUG 32753 / NCTC 10114 / PG1), this protein is Glutamate--tRNA ligase.